A 176-amino-acid chain; its full sequence is Nucleoside triphosphate/diphosphate phosphatase (176 aa).

R23 (proton donor) is an active-site residue. The Mg(2+) site is built by N87, D103, D105, D107, D120, and E123.

It belongs to the Ntdp family. Mg(2+) serves as cofactor.

The enzyme catalyses a ribonucleoside 5'-triphosphate + H2O = a ribonucleoside 5'-diphosphate + phosphate + H(+). It catalyses the reaction a ribonucleoside 5'-diphosphate + H2O = a ribonucleoside 5'-phosphate + phosphate + H(+). Its function is as follows. Has nucleoside phosphatase activity towards nucleoside triphosphates and nucleoside diphosphates. This chain is Nucleoside triphosphate/diphosphate phosphatase, found in Bacillus cereus (strain G9842).